The sequence spans 121 residues: Cell division protein FtsB (121 aa).

Topologically, residues 1 to 6 (MRNWRW) are cytoplasmic. The chain crosses the membrane as a helical span at residues 7–24 (LLLVLAVLLAWLQYRFWF). Residues 25 to 121 (GPGNSGEVMM…PEPIDPVDHP (97 aa)) lie on the Periplasmic side of the membrane. A coiled-coil region spans residues 31–66 (EVMMLEAQVAHQTQDNEGLRQRNQALAAEVKDLKDG). The interval 92-121 (EDAPLPAPASPEAPAPPQQAPEPIDPVDHP) is disordered. Positions 96 to 115 (LPAPASPEAPAPPQQAPEPI) are enriched in pro residues.

This sequence belongs to the FtsB family. As to quaternary structure, part of a complex composed of FtsB, FtsL and FtsQ.

The protein localises to the cell inner membrane. Functionally, essential cell division protein. May link together the upstream cell division proteins, which are predominantly cytoplasmic, with the downstream cell division proteins, which are predominantly periplasmic. This is Cell division protein FtsB from Xanthomonas euvesicatoria pv. vesicatoria (strain 85-10) (Xanthomonas campestris pv. vesicatoria).